The sequence spans 370 residues: Sensor protein GtcS (370 aa).

The next 2 helical transmembrane spans lie at 2-22 and 40-60; these read ITAY…VFYL and AWIV…VYLY. The 53-residue stretch at 66-118 folds into the HAMP domain; sequence KRITGPLEKITDAIQKMREGEFAQRLCFKADYELTLIQEHFNEMVAHLEKTEA. Positions 133-355 constitute a Histidine kinase domain; sequence DLSHDFKTPI…RLENDLPYRL (223 aa).

The protein localises to the cell membrane. It carries out the reaction ATP + protein L-histidine = ADP + protein N-phospho-L-histidine.. Functionally, member of the two-component regulatory system GtcS/GtcR which may act in the control of the transcription of the grs operon which encodes the multienzymes involved in the biosynthesis of the peptide antibiotic gramicidin S. Probably activates GtcR by phosphorylation. The sequence is that of Sensor protein GtcS (gtcS) from Aneurinibacillus migulanus (Bacillus migulanus).